The following is a 254-amino-acid chain: Photosystem II 22 kDa protein 2, chloroplastic (254 aa).

Residues Met-1–Val-38 constitute a chloroplast transit peptide. 2 repeat units span residues Phe-42–Asp-148 and Ala-149–Asp-253. A run of 4 helical transmembrane segments spans residues Val-86 to Leu-106, Ala-120 to Gly-140, Leu-184 to Thr-204, and Pro-219 to Ile-239.

Belongs to the ELIP/psbS family.

It localises to the plastid. The protein resides in the chloroplast thylakoid membrane. Involved in high light-mediated energy-dependent nonphotochemical quenching (NPQ, qE) and thermal dissipation (TD) thus regulating energy conversion in photosystem II and protecting from photoinhibition. Also seems to regulate quantum yield of electron transport in fluctuating light conditions. The sequence is that of Photosystem II 22 kDa protein 2, chloroplastic from Oryza sativa subsp. indica (Rice).